The following is a 390-amino-acid chain: MNLHEYQSKHLLKKYNIPVPASEVVFNPDAAVDAAAKIGGDRWVVKAQVHAGGRGKAGGVRLVKNKEELKSAVKALLGTRLVTYQTDERGQPVNQILVEQTSDIARELYLGAVIDRASQRIVFMASTEGGVEIEKVAEKSPEKILKVTVDPAIGLQPFQCRQLFFGLGLQDLKQMRSFTDIVMGLYRLFTERDLSLLEINPLVITGSGELICLDAKINIDDSALYRQSELREMRDTTQEDEHETMAQQWELNYIKLDGNIGCMVNGAGLAMATMDLIKLSGGDPANFLDVGGSATKERVTEAFRIIVSDKNVKGILVNIFGGIVRCDLIADGIISAVKEVGIDVPVVVRLEGNNAQLGAKKLADSSMNIIAAKGFADAAEQIVKQVGVIA.

The 237-residue stretch at 9-245 (KHLLKKYNIP…TTQEDEHETM (237 aa)) folds into the ATP-grasp domain. ATP contacts are provided by residues K46, 53–55 (GRG), E99, S102, and E107. The Mg(2+) site is built by N200 and D214. Substrate is bound by residues N265 and 322 to 324 (GIV).

It belongs to the succinate/malate CoA ligase beta subunit family. Heterotetramer of two alpha and two beta subunits. Mg(2+) is required as a cofactor.

It carries out the reaction succinate + ATP + CoA = succinyl-CoA + ADP + phosphate. The catalysed reaction is GTP + succinate + CoA = succinyl-CoA + GDP + phosphate. Its pathway is carbohydrate metabolism; tricarboxylic acid cycle; succinate from succinyl-CoA (ligase route): step 1/1. Functionally, succinyl-CoA synthetase functions in the citric acid cycle (TCA), coupling the hydrolysis of succinyl-CoA to the synthesis of either ATP or GTP and thus represents the only step of substrate-level phosphorylation in the TCA. The beta subunit provides nucleotide specificity of the enzyme and binds the substrate succinate, while the binding sites for coenzyme A and phosphate are found in the alpha subunit. The polypeptide is Succinate--CoA ligase [ADP-forming] subunit beta (Coxiella burnetii (strain Dugway 5J108-111)).